Here is a 1822-residue protein sequence, read N- to C-terminus: MAGPRPSPWARLLLAALISVSLSGTLANRCKKAPVKSCTECVRVDKDCAYCTDEMFRDRRCNTQAELLAAGCQRESIVVMESSFQITEETQIDTTLRRSQMSPQGLRVRLRPGEERHFELEVFEPLESPVDLYILMDFSNSMSDDLDNLKKMGQNLARVLSQLTSDYTIGFGKFVDKVSVPQTDMRPEKLKEPWPNSDPPFSFKNVISLTEDVDEFRNKLQGERISGNLDAPEGGFDAILQTAVCTRDIGWRPDSTHLLVFSTESAFHYEADGANVLAGIMSRNDERCHLDTTGTYTQYRTQDYPSVPTLVRLLAKHNIIPIFAVTNYSYSYYEKLHTYFPVSSLGVLQEDSSNIVELLEEAFNRIRSNLDIRALDSPRGLRTEVTSKMFQKTRTGSFHIRRGEVGIYQVQLRALEHVDGTHVCQLPEDQKGNIHLKPSFSDGLKMDAGIICDVCTCELQKEVRSARCSFNGDFVCGQCVCSEGWSGQTCNCSTGSLSDIQPCLREGEDKPCSGRGECQCGHCVCYGEGRYEGQFCEYDNFQCPRTSGFLCNDRGRCSMGQCVCEPGWTGPSCDCPLSNATCIDSNGGICNGRGHCECGRCHCHQQSLYTDTICEINYSAIHPGLCEDLRSCVQCQAWGTGEKKGRTCEECNFKVKMVDELKRAEEVVVRCSFRDEDDDCTYSYTMEGDGAPGPNSTVLVHKKKDCPPGSFWWLIPLLLLLLPLLALLLLLCWKYCACCKACLALLPCCNRGHMVGFKEDHYMLRENLMASDHLDTPMLRSGNLKGRDVVRWKVTNNMQRPGFATHAASINPTELVPYGLSLRLARLCTENLLKPDTRECAQLRQEVEENLNEVYRQISGVHKLQQTKFRQQPNAGKKQDHTIVDTVLMAPRSAKPALLKLTEKQVEQRAFHDLKVAPGYYTLTADQDARGMVEFQEGVELVDVRVPLFIRPEDDDEKQLLVEAIDVPAGTATLGRRLVNITIIKEQARDVVSFEQPEFSVSRGDQVARIPVIRRVLDGGKSQVSYRTQDGTAQGNRDYIPVEGELLFQPGEAWKELQVKLLELQEVDSLLRGRQVRRFHVQLSNPKFGAHLGQPHSTTIIIRDPDELDRSFTSQMLSSQPPPHGDLGAPQNPNAKAAGSRKIHFNWLPPSGKPMGYRVKYWIQGDSESEAHLLDSKVPSVELTNLYPYCDYEMKVCAYGAQGEGPYSSLVSCRTHQEVPSEPGRLAFNVVSSTVTQLSWAEPAETNGEITAYEVCYGLVNDDNRPIGPMKKVLVDNPKNRMLLIENLRESQPYRYTVKARNGAGWGPEREAIINLATQPKRPMSIPIIPDIPIVDAQSGEDYDSFLMYSDDVLRSPSGSQRPSVSDDTGCGWKFEPLLGEELDLRRVTWRLPPELIPRLSASSGRSSDAEAPHGPPDDGGAGGKGGSLPRSATPGPPGEHLVNGRMDFAFPGSTNSLHRMTTTSAAAYGTHLSPHVPHRVLSTSSTLTRDYNSLTRSEHSHSTTLPRDYSTLTSVSSHDSRLTAGVPDTPTRLVFSALGPTSLRVSWQEPRCERPLQGYSVEYQLLNGGELHRLNIPNPAQTSVVVEDLLPNHSYVFRVRAQSQEGWGREREGVITIESQVHPQSPLCPLPGSAFTLSTPSAPGPLVFTALSPDSLQLSWERPRRPNGDIVGYLVTCEMAQGGGPATAFRVDGDSPESRLTVPGLSENVPYKFKVQARTTEGFGPEREGIITIESQDGGPFPQLGSRAGLFQHPLQSEYSSITTTHTSATEPFLVDGLTLGAQHLEAGGSLTRHVTQEFVSRTLTTSGTLSTHMDQQFFQT.

The N-terminal stretch at 1–27 (MAGPRPSPWARLLLAALISVSLSGTLA) is a signal peptide. Residues 28 to 710 (NRCKKAPVKS…HKKKDCPPGS (683 aa)) lie on the Extracellular side of the membrane. Positions 29–73 (RCKKAPVKSCTECVRVDKDCAYCTDEMFRDRRCNTQAELLAAGCQ) constitute a PSI domain. Cystine bridges form between cysteine 30–cysteine 48, cysteine 38–cysteine 455, cysteine 41–cysteine 61, cysteine 51–cysteine 72, cysteine 245–cysteine 288, cysteine 457–cysteine 476, cysteine 468–cysteine 479, and cysteine 481–cysteine 490. One can recognise a VWFA domain in the interval 131–329 (DLYILMDFSN…IPIFAVTNYS (199 aa)). Serine 139 and serine 141 together coordinate Mg(2+). 4 residues coordinate Ca(2+): serine 141, aspartate 144, aspartate 145, and aspartate 176. The involved in NRG1- and IGF1-binding stretch occupies residues 194 to 199 (WPNSDP). Ca(2+) is bound by residues asparagine 228, aspartate 230, proline 232, and glutamate 233. Residue glutamate 233 participates in Mg(2+) binding. A glycan (N-linked (GlcNAc...) asparagine) is linked at asparagine 327. A Ca(2+)-binding site is contributed by glutamate 350. 4 I-EGF domains span residues 457-491 (CELQKEVRSARCSFNGDFVCGQCVCSEGWSGQTCN), 492-537 (CSTG…QFCE), 538-574 (YDNFQCPRTSGFLCNDRGRCSMGQCVCEPGWTGPSCD), and 575-615 (CPLS…TICE). Asparagine 491 carries N-linked (GlcNAc...) asparagine glycosylation. Intrachain disulfides connect cysteine 492–cysteine 520, cysteine 503–cysteine 518, cysteine 512–cysteine 523, cysteine 525–cysteine 536, cysteine 543–cysteine 557, cysteine 551–cysteine 562, cysteine 564–cysteine 573, cysteine 575–cysteine 598, cysteine 582–cysteine 596, cysteine 590–cysteine 601, and cysteine 603–cysteine 614. Asparagine 579 carries N-linked (GlcNAc...) asparagine glycosylation. N-linked (GlcNAc...) asparagine glycosylation occurs at asparagine 617. 4 disulfides stabilise this stretch: cysteine 626–cysteine 671, cysteine 632–cysteine 651, cysteine 635–cysteine 648, and cysteine 680–cysteine 706. N-linked (GlcNAc...) asparagine glycosylation occurs at asparagine 695. The chain crosses the membrane as a helical span at residues 711-733 (FWWLIPLLLLLLPLLALLLLLCW). The tract at residues 732–749 (CWKYCACCKACLALLPCC) is palmitoylated on several cysteines. Topologically, residues 734–1822 (KYCACCKACL…THMDQQFFQT (1089 aa)) are cytoplasmic. Serine 771, serine 1069, and serine 1119 each carry phosphoserine. In terms of domain architecture, Calx-beta spans 979-1084 (VNITIIKEQA…QVRRFHVQLS (106 aa)). Residues 1113 to 1140 (TSQMLSSQPPPHGDLGAPQNPNAKAAGS) are disordered. 2 consecutive Fibronectin type-III domains span residues 1129–1218 (APQN…THQE) and 1222–1321 (EPGR…TQPK). The disordered stretch occupies residues 1400-1444 (LSASSGRSSDAEAPHGPPDDGGAGGKGGSLPRSATPGPPGEHLVN). The span at 1418 to 1427 (DDGGAGGKGG) shows a compositional bias: gly residues. A phosphoserine mark is found at serine 1454, serine 1457, and serine 1474. Residue threonine 1487 is modified to Phosphothreonine. Serine 1494 is modified (phosphoserine). The segment at 1495–1525 (LTRSEHSHSTTLPRDYSTLTSVSSHDSRLTA) is disordered. Residues 1503–1518 (STTLPRDYSTLTSVSS) show a composition bias toward polar residues. Phosphothreonine is present on threonine 1530. Fibronectin type-III domains are found at residues 1530–1625 (TPTR…VHPQ) and 1643–1739 (APGP…SQDG). Residue serine 1791 is modified to Phosphoserine.

This sequence belongs to the integrin beta chain family. As to quaternary structure, heterodimer of an alpha and a beta subunit. Beta-4 associates with alpha-6. Interacts (via cytoplasmic region) with COL17A1 (via cytoplasmic region). Interacts (via cytoplasmic region) with DST isoform 3 (via N-terminus). Isoform beta-4a interacts (via cytoplasmic domain) with DST (via N-terminus). Interacts with RAC1. ITGA6:ITGB4 is found in a ternary complex with NRG1 and ERBB3. ITGA6:ITGB4 is found in a ternary complex with IGF1 and IGF1R. ITGA6:ITGB4 interacts with IGF2. Interacts with TMEM268; this interaction prevents ITGB4 degradation. Palmitoylated by DHHC3 at several cysteines of the membrane-proximal region, enhancing stability and cell surface expression. Palmitoylation also promotes secondary association with tertaspanins. Integrin alpha-6/beta-4 is predominantly expressed by epithelia. Isoform beta-4D is also expressed in colon and placenta. Isoform beta-4E is also expressed in epidermis, lung, duodenum, heart, spleen and stomach.

Its subcellular location is the cell membrane. The protein resides in the cell junction. It localises to the hemidesmosome. Its function is as follows. Integrin alpha-6/beta-4 is a receptor for laminin. Plays a critical structural role in the hemidesmosome of epithelial cells. Is required for the regulation of keratinocyte polarity and motility. ITGA6:ITGB4 binds to NRG1 (via EGF domain) and this binding is essential for NRG1-ERBB signaling. ITGA6:ITGB4 binds to IGF1 and this binding is essential for IGF1 signaling. ITGA6:ITGB4 binds to IGF2 and this binding is essential for IGF2 signaling. The sequence is that of Integrin beta-4 (ITGB4) from Homo sapiens (Human).